The sequence spans 364 residues: tRNA 2-selenouridine synthase (364 aa).

The Rhodanese domain occupies 14-137 (LIADTPIIDV…LRQTTIQATI (124 aa)). C97 functions as the S-selanylcysteine intermediate in the catalytic mechanism.

This sequence belongs to the SelU family. In terms of assembly, monomer.

It carries out the reaction 5-methylaminomethyl-2-thiouridine(34) in tRNA + selenophosphate + (2E)-geranyl diphosphate + H2O + H(+) = 5-methylaminomethyl-2-selenouridine(34) in tRNA + (2E)-thiogeraniol + phosphate + diphosphate. It catalyses the reaction 5-methylaminomethyl-2-thiouridine(34) in tRNA + (2E)-geranyl diphosphate = 5-methylaminomethyl-S-(2E)-geranyl-thiouridine(34) in tRNA + diphosphate. The catalysed reaction is 5-methylaminomethyl-S-(2E)-geranyl-thiouridine(34) in tRNA + selenophosphate + H(+) = 5-methylaminomethyl-2-(Se-phospho)selenouridine(34) in tRNA + (2E)-thiogeraniol. The enzyme catalyses 5-methylaminomethyl-2-(Se-phospho)selenouridine(34) in tRNA + H2O = 5-methylaminomethyl-2-selenouridine(34) in tRNA + phosphate. Its function is as follows. Involved in the post-transcriptional modification of the uridine at the wobble position (U34) of tRNA(Lys), tRNA(Glu) and tRNA(Gln). Catalyzes the conversion of 2-thiouridine (S2U-RNA) to 2-selenouridine (Se2U-RNA). Acts in a two-step process involving geranylation of 2-thiouridine (S2U) to S-geranyl-2-thiouridine (geS2U) and subsequent selenation of the latter derivative to 2-selenouridine (Se2U) in the tRNA chain. This is tRNA 2-selenouridine synthase from Escherichia coli O8 (strain IAI1).